Consider the following 337-residue polypeptide: Mitochondrial uncoupling protein 6 (337 aa).

Solcar repeat units lie at residues 4–136 (KPFL…LKRR), 145–236 (FPLV…VKEI), and 246–331 (GGIG…VRGL). 6 consecutive transmembrane segments (helical) span residues 6–26 (FLEG…LDLI), 105–125 (PAAL…YSAT), 151–171 (ITAG…ADVA), 210–230 (RGSW…LATY), 252–272 (VAAS…IDVV), and 304–324 (YKGL…LFLT).

Belongs to the mitochondrial carrier (TC 2.A.29) family.

The protein localises to the mitochondrion inner membrane. PUMPS are mitochondrial transporter proteins that create proton leaks across the inner mitochondrial membrane, thus uncoupling oxidative phosphorylation. This leads to a decrease in the efficiency of oxidative phosphorylation and an increase in heat production. May be involved in protecting plant cells against oxidative stress damage. Recombinant PUMP6, reconstituted into liposomes, transports a wide range of dicarboxylic acids including malate, oxaloacetate and succinate as well as phosphate, sulfate and thiosulfate. However, it is unknown if these transports are of any biological significance in vivo. The sequence is that of Mitochondrial uncoupling protein 6 (PUMP6) from Arabidopsis thaliana (Mouse-ear cress).